A 250-amino-acid polypeptide reads, in one-letter code: Phosphoribosylaminoimidazole-succinocarboxamide synthase (250 aa).

The protein belongs to the SAICAR synthetase family.

The catalysed reaction is 5-amino-1-(5-phospho-D-ribosyl)imidazole-4-carboxylate + L-aspartate + ATP = (2S)-2-[5-amino-1-(5-phospho-beta-D-ribosyl)imidazole-4-carboxamido]succinate + ADP + phosphate + 2 H(+). It functions in the pathway purine metabolism; IMP biosynthesis via de novo pathway; 5-amino-1-(5-phospho-D-ribosyl)imidazole-4-carboxamide from 5-amino-1-(5-phospho-D-ribosyl)imidazole-4-carboxylate: step 1/2. The chain is Phosphoribosylaminoimidazole-succinocarboxamide synthase from Bifidobacterium adolescentis (strain ATCC 15703 / DSM 20083 / NCTC 11814 / E194a).